A 345-amino-acid polypeptide reads, in one-letter code: Molybdate/tungstate-binding protein WtpA (345 aa).

Positions 1–27 (MREGGVMKKRLLALIVAFAVLTAGCLG) are cleaved as a signal peptide. Molybdate contacts are provided by residues 41–42 (GS), Ser-75, 160–162 (DPC), Glu-218, and Tyr-236. Tungstate contacts are provided by residues 41–42 (GS), Ser-75, 160–162 (DPC), Glu-218, and Tyr-236.

The protein belongs to the bacterial solute-binding protein 1 family. WtpA subfamily. As to quaternary structure, monomer. The complex is composed of two ATP-binding proteins (WtpC), two transmembrane proteins (WtpB) and a solute-binding protein (WtpA).

The protein resides in the cell membrane. Part of the ABC transporter complex WtpABC involved in molybdate/tungstate import. Binds tungstate and molybdate, with a preference for tungstate. The polypeptide is Molybdate/tungstate-binding protein WtpA (Pyrococcus furiosus (strain ATCC 43587 / DSM 3638 / JCM 8422 / Vc1)).